The following is a 361-amino-acid chain: UPF0283 membrane protein mlr0776 (361 aa).

Residues 1 to 33 (MTAPRKPAAFRIEPEAAPTQETPKARQAELSRK) form a disordered region. Basic and acidic residues predominate over residues 23–32 (PKARQAELSR). 2 helical membrane-spanning segments follow: residues 73 to 93 (LFGSIFFGAIGVLVSLAVGLW) and 108 to 128 (LGWLAAGMAAIAVLALVVILI).

It belongs to the UPF0283 family.

Its subcellular location is the cell inner membrane. The chain is UPF0283 membrane protein mlr0776 from Mesorhizobium japonicum (strain LMG 29417 / CECT 9101 / MAFF 303099) (Mesorhizobium loti (strain MAFF 303099)).